We begin with the raw amino-acid sequence, 706 residues long: Polyribonucleotide nucleotidyltransferase (706 aa).

2 residues coordinate Mg(2+): Asp-483 and Asp-489. Residues 550-609 enclose the KH domain; sequence PRITTIWVKTDKIRDVIGTGGKNIRNITETTGVTVDIEDTGRINIASTSKEACDLAIQMI. Positions 619 to 687 constitute an S1 motif domain; that stretch reads GKLYMGIVKK…KNGKVKLSRK (69 aa).

This sequence belongs to the polyribonucleotide nucleotidyltransferase family. Mg(2+) serves as cofactor.

The protein resides in the cytoplasm. It carries out the reaction RNA(n+1) + phosphate = RNA(n) + a ribonucleoside 5'-diphosphate. Its function is as follows. Involved in mRNA degradation. Catalyzes the phosphorolysis of single-stranded polyribonucleotides processively in the 3'- to 5'-direction. In Pelobacter propionicus (strain DSM 2379 / NBRC 103807 / OttBd1), this protein is Polyribonucleotide nucleotidyltransferase.